The primary structure comprises 516 residues: Probable metalloreductase AIM14 (516 aa).

The next 7 helical transmembrane spans lie at 18-38 (IGYG…LLLL), 64-84 (LHLP…YSVI), 97-117 (LSYV…YILS), 128-148 (HMWL…AFVI), 168-188 (LLGF…TGVI), 195-215 (SFYM…PVHA), and 217-237 (PGVA…HALA). Residues 94–207 (LGRLSYVLLF…MVHQINAFAI (114 aa)) enclose the Ferric oxidoreductase domain. Residues 238–363 (RVSFCMSSAV…GGTGISLGLP (126 aa)) form the FAD-binding FR-type domain.

This sequence belongs to the ferric reductase (FRE) family. AIM14 subfamily.

The protein localises to the membrane. Functionally, probable cell surface metalloreductase. May be involved in iron or copper homeostasis. This is Probable metalloreductase AIM14 (AIM14) from Eremothecium gossypii (strain ATCC 10895 / CBS 109.51 / FGSC 9923 / NRRL Y-1056) (Yeast).